Reading from the N-terminus, the 539-residue chain is Phenylacetyl-CoA ligase epaB (539 aa).

Residue 188–199 (RLFSSGTTGLPK) participates in AMP binding. An AMP-binding region spans residues 449-525 (EVEGVLRNHP…DAIPRNASGK (77 aa)).

Belongs to the ATP-dependent AMP-binding enzyme family.

The protein operates within secondary metabolite biosynthesis. Functionally, phenylacetyl-CoA ligase; part of the gene cluster that mediates the biosynthesis of nigerpyrone and its derivatives carbonarone A and pestalamide A. The biosynthesis pathway begins with the polyketide assembly by epaA to form phenylacetyl triketide precursor from successive condensation of two malonyl-CoA, presumably with one phenylacetyl-CoA starter unit produced by the phenylacetyl-CoA ligase epaB. For the nigerpyrone biosynthesis, the reactive polyketide chain is released as an aldehyde through the R-domain. A nonenzymatic cyclization and dehydration may create nigerpyrone. For the biosynthesis of carbonarone A and pestalamide A, an extra methyl group is added through the C-methyltransferase domain. Several further steps involving the dehydrogenase orf1, the cytochrome P450 monooxygenase orf2 and the FAD-dependent monooxygenase orf3 are required to form a carbonarone A precursor which is converted to carbonarone A via cyclization. The O-acetyltransferase epaC could catalyze the transfer of 2-methylsuccinyl-CoA, a common intermediate in the ethylmalonyl-CoA pathway, to generate the final product pestalamide A. The chain is Phenylacetyl-CoA ligase epaB from Aspergillus niger (strain ATCC MYA-4892 / CBS 513.88 / FGSC A1513).